A 46-amino-acid polypeptide reads, in one-letter code: Photosystem II reaction center protein K (46 aa).

Positions 1–9 (MTTLALVLA) are excised as a propeptide. The helical transmembrane segment at 18–38 (FAPIVDVLPVIPVFFILLAFV) threads the bilayer.

This sequence belongs to the PsbK family. As to quaternary structure, PSII is composed of 1 copy each of membrane proteins PsbA, PsbB, PsbC, PsbD, PsbE, PsbF, PsbH, PsbI, PsbJ, PsbK, PsbL, PsbM, PsbT, PsbX, PsbY, PsbZ, Psb30/Ycf12, at least 3 peripheral proteins of the oxygen-evolving complex and a large number of cofactors. It forms dimeric complexes. This protein is tightly associated with CP43 (psbC), one of the core proteins.

It localises to the plastid. Its subcellular location is the chloroplast thylakoid membrane. Functionally, one of the components of the core complex of photosystem II (PSII). PSII is a light-driven water:plastoquinone oxidoreductase that uses light energy to abstract electrons from H(2)O, generating O(2) and a proton gradient subsequently used for ATP formation. It consists of a core antenna complex that captures photons, and an electron transfer chain that converts photonic excitation into a charge separation. Required for assembly and/or stability of PSII. The sequence is that of Photosystem II reaction center protein K from Chlamydomonas reinhardtii (Chlamydomonas smithii).